The following is a 124-amino-acid chain: uncharacterized protein (124 aa).

Residues methionine 1 to tyrosine 65 form a disordered region. A compositionally biased stretch (polar residues) spans leucine 37–valine 47.

This is an uncharacterized protein from Microplitis demolitor (Parasitoid wasp).